The sequence spans 231 residues: 2-C-methyl-D-erythritol 4-phosphate cytidylyltransferase (231 aa).

Belongs to the IspD/TarI cytidylyltransferase family. IspD subfamily. As to quaternary structure, homodimer.

The enzyme catalyses 2-C-methyl-D-erythritol 4-phosphate + CTP + H(+) = 4-CDP-2-C-methyl-D-erythritol + diphosphate. Its pathway is isoprenoid biosynthesis; isopentenyl diphosphate biosynthesis via DXP pathway; isopentenyl diphosphate from 1-deoxy-D-xylulose 5-phosphate: step 2/6. Its function is as follows. Catalyzes the formation of 4-diphosphocytidyl-2-C-methyl-D-erythritol from CTP and 2-C-methyl-D-erythritol 4-phosphate (MEP). This chain is 2-C-methyl-D-erythritol 4-phosphate cytidylyltransferase, found in Citrobacter koseri (strain ATCC BAA-895 / CDC 4225-83 / SGSC4696).